We begin with the raw amino-acid sequence, 96 residues long: SPbeta prophage-derived uncharacterized protein YosV (96 aa).

The protein is SPbeta prophage-derived uncharacterized protein YosV (yosV) of Bacillus subtilis (strain 168).